The sequence spans 170 residues: Small ribosomal subunit protein uS13 (170 aa).

Residues 128–140 (VRHKRGQKVRGQR) show a composition bias toward basic residues. The interval 128–170 (VRHKRGQKVRGQRTKSTGRTEGTIGVNVEAIKEEQAEDGGDEE) is disordered.

The protein belongs to the universal ribosomal protein uS13 family. As to quaternary structure, part of the 30S ribosomal subunit. Forms a loose heterodimer with protein S19. Forms two bridges to the 50S subunit in the 70S ribosome.

Its function is as follows. Located at the top of the head of the 30S subunit, it contacts several helices of the 16S rRNA. In the 70S ribosome it contacts the 23S rRNA (bridge B1a) and protein L5 of the 50S subunit (bridge B1b), connecting the 2 subunits; these bridges are implicated in subunit movement. The chain is Small ribosomal subunit protein uS13 from Natronomonas pharaonis (strain ATCC 35678 / DSM 2160 / CIP 103997 / JCM 8858 / NBRC 14720 / NCIMB 2260 / Gabara) (Halobacterium pharaonis).